A 166-amino-acid polypeptide reads, in one-letter code: UPF0304 protein VF_1794 (166 aa).

Belongs to the UPF0304 family.

This Aliivibrio fischeri (strain ATCC 700601 / ES114) (Vibrio fischeri) protein is UPF0304 protein VF_1794.